Consider the following 699-residue polypeptide: Cysteine--tRNA ligase (699 aa).

Residues 1–226 (MTTITEKRLT…SEQQRLIHNP (226 aa)) are unknown. Zn(2+) is bound at residue Cys254. A 'HIGH' region motif is present at residues 256–266 (MTVYDYCHLGH). 3 residues coordinate Zn(2+): Cys435, His460, and Glu464. The short motif at 508 to 512 (KMSKS) is the 'KMSKS' region element. An ATP-binding site is contributed by Lys511.

The protein belongs to the class-I aminoacyl-tRNA synthetase family. As to quaternary structure, monomer. Requires Zn(2+) as cofactor.

It localises to the cytoplasm. It carries out the reaction tRNA(Cys) + L-cysteine + ATP = L-cysteinyl-tRNA(Cys) + AMP + diphosphate. The protein is Cysteine--tRNA ligase (cysS) of Neisseria meningitidis serogroup A / serotype 4A (strain DSM 15465 / Z2491).